The sequence spans 397 residues: Tryptophan synthase beta chain (397 aa).

N6-(pyridoxal phosphate)lysine is present on lysine 88.

It belongs to the TrpB family. In terms of assembly, tetramer of two alpha and two beta chains. Pyridoxal 5'-phosphate serves as cofactor.

It carries out the reaction (1S,2R)-1-C-(indol-3-yl)glycerol 3-phosphate + L-serine = D-glyceraldehyde 3-phosphate + L-tryptophan + H2O. Its pathway is amino-acid biosynthesis; L-tryptophan biosynthesis; L-tryptophan from chorismate: step 5/5. In terms of biological role, the beta subunit is responsible for the synthesis of L-tryptophan from indole and L-serine. This Haemophilus influenzae (strain 86-028NP) protein is Tryptophan synthase beta chain.